We begin with the raw amino-acid sequence, 310 residues long: Ribose-phosphate pyrophosphokinase (310 aa).

Residues 33–35 (DGE) and 92–93 (RQ) contribute to the ATP site. Mg(2+) is bound by residues histidine 127 and aspartate 166. Lysine 189 is a catalytic residue. Residues arginine 191, aspartate 215, and 219–223 (DTAGT) contribute to the D-ribose 5-phosphate site.

This sequence belongs to the ribose-phosphate pyrophosphokinase family. Class I subfamily. As to quaternary structure, homohexamer. Mg(2+) serves as cofactor.

It localises to the cytoplasm. The enzyme catalyses D-ribose 5-phosphate + ATP = 5-phospho-alpha-D-ribose 1-diphosphate + AMP + H(+). Its pathway is metabolic intermediate biosynthesis; 5-phospho-alpha-D-ribose 1-diphosphate biosynthesis; 5-phospho-alpha-D-ribose 1-diphosphate from D-ribose 5-phosphate (route I): step 1/1. Functionally, involved in the biosynthesis of the central metabolite phospho-alpha-D-ribosyl-1-pyrophosphate (PRPP) via the transfer of pyrophosphoryl group from ATP to 1-hydroxyl of ribose-5-phosphate (Rib-5-P). This chain is Ribose-phosphate pyrophosphokinase, found in Bordetella parapertussis (strain 12822 / ATCC BAA-587 / NCTC 13253).